We begin with the raw amino-acid sequence, 109 residues long: U26-theraphotoxin-Cg1b (109 aa).

The signal sequence occupies residues 1 to 18 (MNTIIPLLLLSLLITVYA). The propeptide occupies 19-67 (YALEDGNKEEMQDIAESEFEASNEMLQLAHLLEADRAETEEDRNSRQKR). 3 disulfide bridges follow: cysteine 68-cysteine 83, cysteine 75-cysteine 88, and cysteine 82-cysteine 103.

Belongs to the neurotoxin 14 (magi-1) family. 07 (Jztx-56) subfamily. Expressed by the venom gland.

Its subcellular location is the secreted. Probable ion channel inhibitor. This chain is U26-theraphotoxin-Cg1b, found in Chilobrachys guangxiensis (Chinese earth tiger tarantula).